Reading from the N-terminus, the 330-residue chain is Mas-related G-protein coupled receptor member X2 (330 aa).

The Extracellular segment spans residues 1–33 (MDPTTPAWGNESTTMNGNDQALPLLCGKETLIP). Residues 34–54 (VFLILFIALVGLVGNGFVLWL) traverse the membrane as a helical segment. The Cytoplasmic segment spans residues 55 to 63 (LGFCMRRNA). A helical transmembrane segment spans residues 64–84 (FSVYVLSLAGADFLFLCFQLI). Residues 85 to 96 (NCLVYLSNFFCS) are Extracellular-facing. Residues 97 to 117 (ISIDFPSFFTTVMTCAYLAGL) form a helical membrane-spanning segment. Residues 118–144 (SMLSTISTERCLSVLWPIWYRCRRPRH) lie on the Cytoplasmic side of the membrane. A helical transmembrane segment spans residues 145-165 (LSAVVCVLLWALSLLLSILEG). The Extracellular segment spans residues 166-184 (KFCGFFFSDGDSGWCQTFD). The chain crosses the membrane as a helical span at residues 185 to 205 (FITAAWLIFLFMVLCGSSLAL). At 206–228 (LVRILCGSRGLPLTRLYLTILLT) the chain is on the cytoplasmic side. The chain crosses the membrane as a helical span at residues 229 to 249 (VLVFLLCGLPFGIQWFLILWI). Topologically, residues 250-264 (WENSDVLFCHIHPVS) are extracellular. A helical membrane pass occupies residues 265–285 (VVLSSLNSSANPIIYFFVGTF). Topologically, residues 286–330 (RKQWRLQQPILKLALQRALQDTAEVDHSEGCFRQGTPEMSRSSLV) are cytoplasmic.

Belongs to the G-protein coupled receptor 1 family. Mas subfamily.

The protein localises to the cell membrane. Functionally, mast cell-specific receptor for basic secretagogues, i.e. cationic amphiphilic drugs, as well as endo- or exogenous peptides, consisting of a basic head group and a hydrophobic core. Recognizes and binds small molecules containing a cyclized tetrahydroisoquinoline (THIQ), such as non-steroidal neuromuscular blocking drugs (NMBDs), including tubocurarine and atracurium. In response to these compounds, mediates pseudo-allergic reactions characterized by histamine release, inflammation and airway contraction. The chain is Mas-related G-protein coupled receptor member X2 (MRGPRX2) from Pongo pygmaeus (Bornean orangutan).